The following is a 302-amino-acid chain: Monopolin complex subunit MAM1 (302 aa).

2 disordered regions span residues 53–83 and 257–276; these read YHKEHSVKPKQNSGNVAAKEDKDTQHLQNNV and TSENPFSSSPNTKKIKSKGK. Polar residues predominate over residues 257-268; that stretch reads TSENPFSSSPNT.

Component of the monopolin complex composed of at least CSM1, LRS4 and MAM1. The complex associates with the kinetochore during late pachytene. Post-translationally, phosphorylated by CDC5. This phosphorylation is required for the location to the kinetochores during late pachytene.

It is found in the nucleus. In terms of biological role, component of the monopolin complex which promotes monoorientation during meiosis I, required for chromosome segregation during meiosis. In Saccharomyces cerevisiae (strain ATCC 204508 / S288c) (Baker's yeast), this protein is Monopolin complex subunit MAM1 (MAM1).